The sequence spans 916 residues: Translation initiation factor IF-2 (916 aa).

The interval 50-326 (NRDKESTSQP…NSTLQQGFNK (277 aa)) is disordered. Residues 109–241 (AQREAEEKAR…LAEENAEKWT (133 aa)) show a composition bias toward basic and acidic residues. Basic residues predominate over residues 277 to 291 (GRGRAAKAPRPKKNN). Basic and acidic residues predominate over residues 292–304 (RHSEKADREEARA). The tr-type G domain occupies 415 to 584 (SRAPVVTIMG…LLQAEVLELK (170 aa)). Residues 424–431 (GHVDHGKT) form a G1 region. 424–431 (GHVDHGKT) contributes to the GTP binding site. The interval 449–453 (GITQH) is G2. A G3 region spans residues 470–473 (DTPG). Residues 470–474 (DTPGH) and 524–527 (NKID) each bind GTP. Residues 524–527 (NKID) form a G4 region. Positions 560-562 (SAK) are G5.

Belongs to the TRAFAC class translation factor GTPase superfamily. Classic translation factor GTPase family. IF-2 subfamily.

The protein localises to the cytoplasm. One of the essential components for the initiation of protein synthesis. Protects formylmethionyl-tRNA from spontaneous hydrolysis and promotes its binding to the 30S ribosomal subunits. Also involved in the hydrolysis of GTP during the formation of the 70S ribosomal complex. The polypeptide is Translation initiation factor IF-2 (Proteus mirabilis (strain HI4320)).